Consider the following 423-residue polypeptide: Glucose-1-phosphate adenylyltransferase (423 aa).

Residues Y107, G172, 187-188, and S205 each bind alpha-D-glucose 1-phosphate; that span reads EK.

It belongs to the bacterial/plant glucose-1-phosphate adenylyltransferase family. In terms of assembly, homotetramer.

It catalyses the reaction alpha-D-glucose 1-phosphate + ATP + H(+) = ADP-alpha-D-glucose + diphosphate. It participates in glycan biosynthesis; glycogen biosynthesis. Its function is as follows. Involved in the biosynthesis of ADP-glucose, a building block required for the elongation reactions to produce glycogen. Catalyzes the reaction between ATP and alpha-D-glucose 1-phosphate (G1P) to produce pyrophosphate and ADP-Glc. In Albidiferax ferrireducens (strain ATCC BAA-621 / DSM 15236 / T118) (Rhodoferax ferrireducens), this protein is Glucose-1-phosphate adenylyltransferase.